Here is an 863-residue protein sequence, read N- to C-terminus: Neuroligin-1 (863 aa).

An N-terminal signal peptide occupies residues 1–45 (MALPRCTWPNYVWRAVMACLVHRGLGAPLTLCMLGCLLQAGHVLS). The Extracellular portion of the chain corresponds to 46 to 717 (QKLDDVDPLV…DQRDYSTELS (672 aa)). An N-linked (GlcNAc...) (complex) asparagine glycan is attached at N109. C117 and C153 form a disulfide bridge. The interval 183–212 (KGGPLTKKQTDDLGDNDGAEDEDIRDSGGP) is disordered. The span at 194 to 206 (DLGDNDGAEDEDI) shows a compositional bias: acidic residues. Residues N323 and N363 are each glycosylated (N-linked (GlcNAc...) (complex) asparagine). Intrachain disulfides connect C362-C373 and C532-C566. N-linked (GlcNAc...) asparagine glycosylation is present at N567. The segment at 670 to 708 (PSTDITFRPTRKNSVPVTSAFPTAKQDDPKQQPSPFSVD) is disordered. Residues 681-690 (KNSVPVTSAF) are compositionally biased toward polar residues. S703 and S706 each carry an O-linked (GalNAc...) serine glycan. The helical transmembrane segment at 718-738 (VTIAVGASLLFLNILAFAALY) threads the bilayer. Residues 739-863 (YKKDKRRHDV…HPHSHSTTRV (125 aa)) lie on the Cytoplasmic side of the membrane. A disordered region spans residues 842–863 (GGQNNTLPHPHPHPHSHSTTRV). Residues 851-863 (PHPHPHSHSTTRV) are compositionally biased toward basic residues.

Belongs to the type-B carboxylesterase/lipase family. As to quaternary structure, interacts with neurexins NRXN1, NRXN2 and NRXN3. Interaction with neurexins is mediated by heparan sulfate glycan modification on neurexin. Interacts with NLGN3. Interacts with AIP1 and PDZRN3. Interacts (via its C-terminus) with DLG4/PSD-95 (via PDZ domain 3). Interacts with GOPC. Expressed in the blood vessel walls (at protein level). Highly expressed in brain through prenatal stages, and at lower levels in pancreas islet beta cells.

It is found in the cell membrane. The protein resides in the postsynaptic density. It localises to the synaptic cleft. Its subcellular location is the synaptic cell membrane. Cell surface protein involved in cell-cell-interactions via its interactions with neurexin family members. Plays a role in synapse function and synaptic signal transmission, and probably mediates its effects by recruiting and clustering other synaptic proteins. May promote the initial formation of synapses, but is not essential for this. In vitro, triggers the de novo formation of presynaptic structures. May be involved in specification of excitatory synapses. Required to maintain wakefulness quality and normal synchrony of cerebral cortex activity during wakefulness and sleep. The protein is involved in nervous system development. The chain is Neuroligin-1 (NLGN1) from Homo sapiens (Human).